Reading from the N-terminus, the 305-residue chain is Dihydroorotate dehydrogenase B (NAD(+)), catalytic subunit (305 aa).

FMN is bound by residues Ser-21 and 45 to 46 (KG). Substrate contacts are provided by residues Lys-45 and 69–73 (NAVGL). 2 residues coordinate FMN: Asn-99 and Asn-127. Asn-127 contributes to the substrate binding site. Cys-130 acts as the Nucleophile in catalysis. Residues Lys-165 and Ile-191 each coordinate FMN. Position 192–193 (192–193 (NT)) interacts with substrate. FMN is bound by residues Gly-217, 243–244 (GG), and 265–266 (GT).

It belongs to the dihydroorotate dehydrogenase family. Type 1 subfamily. Heterotetramer of 2 PyrK and 2 PyrD type B subunits. Requires FMN as cofactor.

The protein localises to the cytoplasm. It carries out the reaction (S)-dihydroorotate + NAD(+) = orotate + NADH + H(+). It functions in the pathway pyrimidine metabolism; UMP biosynthesis via de novo pathway; orotate from (S)-dihydroorotate (NAD(+) route): step 1/1. Its function is as follows. Catalyzes the conversion of dihydroorotate to orotate with NAD(+) as electron acceptor. The sequence is that of Dihydroorotate dehydrogenase B (NAD(+)), catalytic subunit (pyrD) from Parabacteroides distasonis (strain ATCC 8503 / DSM 20701 / CIP 104284 / JCM 5825 / NCTC 11152).